Consider the following 210-residue polypeptide: 3-demethoxyubiquinol 3-hydroxylase (210 aa).

Residues E59, E89, H92, E141, E173, and H176 each coordinate Fe cation.

This sequence belongs to the COQ7 family. Fe cation serves as cofactor.

The protein localises to the cell membrane. The catalysed reaction is a 5-methoxy-2-methyl-3-(all-trans-polyprenyl)benzene-1,4-diol + AH2 + O2 = a 3-demethylubiquinol + A + H2O. Its pathway is cofactor biosynthesis; ubiquinone biosynthesis. Its function is as follows. Catalyzes the hydroxylation of 2-nonaprenyl-3-methyl-6-methoxy-1,4-benzoquinol during ubiquinone biosynthesis. The polypeptide is 3-demethoxyubiquinol 3-hydroxylase (Albidiferax ferrireducens (strain ATCC BAA-621 / DSM 15236 / T118) (Rhodoferax ferrireducens)).